The chain runs to 790 residues: Spermatogenesis-associated protein 20 (790 aa).

The segment covering 1–19 (MSHHSSPPPKHKGEHKGHG) has biased composition (basic residues). The segment at 1–67 (MSHHSSPPPK…PPPAPPKTVN (67 aa)) is disordered. Position 5 is a phosphoserine (serine 5). Over residues 23–36 (GSERGSSSRDKDRS) the composition is skewed to basic and acidic residues. Serine 653 carries the phosphoserine modification.

It is found in the secreted. May play a role in fertility regulation. The sequence is that of Spermatogenesis-associated protein 20 (Spata20) from Mus musculus (Mouse).